The following is a 412-amino-acid chain: CCA-adding enzyme (412 aa).

S41 and K44 together coordinate ATP. CTP contacts are provided by S41 and K44. Mg(2+) contacts are provided by D53, D55, and D106. Residues H129, K149, and Y158 each contribute to the ATP site. Positions 129, 149, and 158 each coordinate CTP.

This sequence belongs to the tRNA nucleotidyltransferase/poly(A) polymerase family. Archaeal CCA-adding enzyme subfamily. As to quaternary structure, homodimer. Mg(2+) is required as a cofactor.

The catalysed reaction is a tRNA precursor + 2 CTP + ATP = a tRNA with a 3' CCA end + 3 diphosphate. The enzyme catalyses a tRNA with a 3' CCA end + 2 CTP + ATP = a tRNA with a 3' CCACCA end + 3 diphosphate. Catalyzes the addition and repair of the essential 3'-terminal CCA sequence in tRNAs without using a nucleic acid template. Adds these three nucleotides in the order of C, C, and A to the tRNA nucleotide-73, using CTP and ATP as substrates and producing inorganic pyrophosphate. tRNA 3'-terminal CCA addition is required both for tRNA processing and repair. Also involved in tRNA surveillance by mediating tandem CCA addition to generate a CCACCA at the 3' terminus of unstable tRNAs. While stable tRNAs receive only 3'-terminal CCA, unstable tRNAs are marked with CCACCA and rapidly degraded. The polypeptide is CCA-adding enzyme (Saccharolobus islandicus (strain Y.G.57.14 / Yellowstone #1) (Sulfolobus islandicus)).